We begin with the raw amino-acid sequence, 881 residues long: MGSKPWLHPAPQYKTLETFWDDEDDAPGPRCAHTLTAVAATKTHGPRLILFGGATAIEGGSSSVPGIRLAGVTNTVHSYDILTRKWTRLKPAGEPPSPRAAHAAAAVGTMVVFQGGIGPAGHSTDDLYVLDMTNDKFKWHRVVVQGDGPGPRYGHVMDLVSQRYLVTVTGNDGKRALSDAWALDTAQKPYVWQRLNPDGDRPSARMYASGSARSDGMFLLCGGRDTLGAPLGDAYGLLMHRNGQWEWTLAPGVAPSPRYQHAAVFVGARLHVSGGVLRGGRVIDAEASVAVLDTAAGVWLDRNGQVTSARGSKGQIDQDPSFELMRRCRHGAASVGIRIYVHGGLRGDVLLDDFLVAENSTFQSDISSPLLASDRTQQSSTPRFSYAARPPSGSEPSFSMSEGLSLDENSLEKLTEASAAEAEVASSVWRAAQLGAGTLDEEPSTSDASSPIVESTTDGTANEGDVRLHPRAVVVAKETVGSLGGMVRQLSLDQFQNESRRMVPMNNSDVPQPTKKFTRQKSPQGLHKKVIAALLRPRNWKPPGNRKFFLDSYEVGELCYAAEQIFMHEQTVLQLKAPIKVFGDLHGQFGDLMRLFDEYGFPSTAGDITYIDYLFLGDYVDRGQHSLETITLLLALKIEYPENVHLIRGNHEAADINALFGFRLECIERMGENDGIWAWTRFNQLFNYLPLAALIENKIICMHGGIGRSISTVEQIEKIERPITMDAGSLVLMDLLWSDPTENDSIEGLRPNARGPGLVTFGPDRVTEFCKRNKLQLIIRAHECVMDGFERFAQGQLITLFSATNYCGTANNAGAILVVGRGLVIVPKLIHPLPPPILSPENSPEHSGDDAWMQELNIQRPPTPTRGRPQPDFDRSSLAYI.

Kelch repeat units follow at residues 60-109, 269-320, and 338-385; these read GSSS…AVGT, RLHV…DQDP, and RIYV…PRFS. 2 disordered regions span residues 368–407 and 436–464; these read SPLL…LSLD and AGTL…ANEG. Composition is skewed to polar residues over residues 374–383 and 445–460; these read DRTQQSSTPR and TSDA…TDGT. A Phosphoserine modification is found at serine 491. The disordered stretch occupies residues 503–522; the sequence is VPMNNSDVPQPTKKFTRQKS. Positions 584, 586, 618, and 650 each coordinate Mn(2+). Histidine 651 functions as the Proton donor in the catalytic mechanism. Positions 703 and 782 each coordinate Mn(2+). A disordered region spans residues 837-881; that stretch reads ILSPENSPEHSGDDAWMQELNIQRPPTPTRGRPQPDFDRSSLAYI. At serine 839 the chain carries Phosphoserine.

This sequence belongs to the PPP phosphatase family. BSU subfamily. As to quaternary structure, interacts with CDG1 and CDL1. The cofactor is Mn(2+). As to expression, expressed in mature cauline leaves and at the tip of influorescence, including flowers. Expressed at lower level in young tissues relative to older ones.

The protein resides in the nucleus. The catalysed reaction is O-phospho-L-seryl-[protein] + H2O = L-seryl-[protein] + phosphate. It catalyses the reaction O-phospho-L-threonyl-[protein] + H2O = L-threonyl-[protein] + phosphate. Its function is as follows. Phosphatase involved in elongation process, probably by acting as a regulator of brassinolide signaling. The polypeptide is Serine/threonine-protein phosphatase BSL1 (BSL1) (Arabidopsis thaliana (Mouse-ear cress)).